Consider the following 342-residue polypeptide: Isopentenyl-diphosphate delta-isomerase (342 aa).

11 to 12 (RK) is a binding site for substrate. FMN-binding positions include Ser68, 69–71 (SMT), Ser99, and Asn127. Substrate is bound at residue 99-101 (SMR). Position 162 (Gln162) interacts with substrate. Glu163 contributes to the Mg(2+) binding site. Residues Lys194, Thr224, 274–276 (GLK), and 295–296 (AG) each bind FMN.

This sequence belongs to the IPP isomerase type 2 family. In terms of assembly, homooctamer. Dimer of tetramers. FMN serves as cofactor. It depends on NADPH as a cofactor. The cofactor is Mg(2+).

It localises to the cytoplasm. It catalyses the reaction isopentenyl diphosphate = dimethylallyl diphosphate. In terms of biological role, involved in the biosynthesis of isoprenoids. Catalyzes the 1,3-allylic rearrangement of the homoallylic substrate isopentenyl (IPP) to its allylic isomer, dimethylallyl diphosphate (DMAPP). This is Isopentenyl-diphosphate delta-isomerase from Rickettsia rickettsii (strain Iowa).